Reading from the N-terminus, the 707-residue chain is Terpene cyclase/mutase atnI (707 aa).

Over residues 1–20 the composition is skewed to polar residues; it reads MGQHIASSESSTNGHVSLET. The segment at 1-22 is disordered; the sequence is MGQHIASSESSTNGHVSLETNG. 4 PFTB repeats span residues 130–173, 494–535, 571–608, and 620–661; these read AVEI…RLLG, LRDA…VGKT, TAQG…ETLA, and SRRG…VQTA.

Belongs to the terpene cyclase/mutase family.

Its pathway is secondary metabolite biosynthesis; terpenoid biosynthesis. Terpene cyclase/mutase; part of the gene cluster that mediates the biosynthesis of the meroterpenoids arthripenoids. The pathway begins with the HR-PKS atnH that catalyzes two chain-extension steps to form a reduced triketide, which then primes the SAT domain in the NR-PKS atnG to initiate three more cycles of extension to give a linear hexaketide corresponding to the polyketide part of arthripenoids. The FAD-dependent monooxygenase atnJ then performs an oxidative decarboxylation at C11 of the atnH/atnG product, via an electrophilic aromatic hydroxylation with concomitant ipso-decarboxylation. The membrane-bound polyprenyl transferase atnF then introduces a farnesyl group before the FAD-dependent monooxygenase atnK functions as the first epoxidase on terminal C12'-C13' olefin, followed by a second epoxidation on C7'-C8' catalyzed by atnA. The terpene cyclase/mutase atnI then initiates the sequential tricyclic ring formation through protonation of the terminal epoxide and catalyzes the regioselective and stereoselective 6/6/6-tricyclic ring formation. The cytochrome P450 monooxygenase atnM is responsible for hydroxylating both C1' and C10'. The next steps may involve ketoreduction and acetyl transfer by the ketoreductase atnB and the acetyltransferase atnC, and lead to the production of arthripenoid B, the final biosynthetic product of the atn cluster. The hydroquinone moiety in arthripenoid B is prone to undergo spontaneous oxidation to afford a benzoquinone compound, a key intermediate for generating structure diversity. For instance, addition of a cysteine followed by ring contraction gives arthripenoid A, tautomerization gives the main product arthripenoid C, addition of a molecular of water or amine affords arthripenoid D or E, respectively, and loss of one water forms arthripenoid F. This is Terpene cyclase/mutase atnI from Arthrinium sp.